A 76-amino-acid chain; its full sequence is Acyl carrier protein (76 aa).

The Carrier domain occupies 2–76 (SNIEERVIKV…QSAIDFVKSR (75 aa)). Serine 37 is subject to O-(pantetheine 4'-phosphoryl)serine.

It belongs to the acyl carrier protein (ACP) family. 4'-phosphopantetheine is transferred from CoA to a specific serine of apo-ACP by AcpS. This modification is essential for activity because fatty acids are bound in thioester linkage to the sulfhydryl of the prosthetic group.

The protein localises to the cytoplasm. Its pathway is lipid metabolism; fatty acid biosynthesis. Functionally, carrier of the growing fatty acid chain in fatty acid biosynthesis. The sequence is that of Acyl carrier protein from Dichelobacter nodosus (strain VCS1703A).